We begin with the raw amino-acid sequence, 332 residues long: 2,3-diketo-L-gulonate reductase (332 aa).

The active-site Proton donor is the histidine 44. NAD(+)-binding positions include 168-174 (ITMVDMS), 224-225 (WK), and 304-306 (GHE).

It belongs to the LDH2/MDH2 oxidoreductase family. DlgD subfamily. Homodimer.

It localises to the cytoplasm. The enzyme catalyses 3-dehydro-L-gulonate + NAD(+) = 2,3-dioxo-L-gulonate + NADH + H(+). It catalyses the reaction 3-dehydro-L-gulonate + NADP(+) = 2,3-dioxo-L-gulonate + NADPH + H(+). Functionally, catalyzes the reduction of 2,3-diketo-L-gulonate in the presence of NADH, to form 3-keto-L-gulonate. The polypeptide is 2,3-diketo-L-gulonate reductase (Escherichia coli O81 (strain ED1a)).